Here is a 118-residue protein sequence, read N- to C-terminus: UPF0102 protein Bcav_2532 (118 aa).

The protein belongs to the UPF0102 family.

The chain is UPF0102 protein Bcav_2532 from Beutenbergia cavernae (strain ATCC BAA-8 / DSM 12333 / CCUG 43141 / JCM 11478 / NBRC 16432 / NCIMB 13614 / HKI 0122).